The primary structure comprises 272 residues: HMP-PP phosphatase (272 aa).

D8 serves as the catalytic Nucleophile. Mg(2+) contacts are provided by D8, D10, and D212.

This sequence belongs to the HAD-like hydrolase superfamily. Cof family. Requires Mg(2+) as cofactor.

It carries out the reaction 4-amino-2-methyl-5-(diphosphooxymethyl)pyrimidine + H2O = 4-amino-2-methyl-5-(phosphooxymethyl)pyrimidine + phosphate + H(+). Its function is as follows. Catalyzes the hydrolysis of 4-amino-2-methyl-5-hydroxymethylpyrimidine pyrophosphate (HMP-PP) to 4-amino-2-methyl-5-hydroxymethylpyrimidine phosphate (HMP-P). The chain is HMP-PP phosphatase from Escherichia coli (strain UTI89 / UPEC).